Reading from the N-terminus, the 312-residue chain is uncharacterized protein (312 aa).

The tract at residues 95 to 119 (EKRRENPPKLTLPPLPPPAEERKKP) is disordered.

Its subcellular location is the plastid. The protein localises to the chloroplast. This is an uncharacterized protein from Chlamydomonas moewusii (Chlamydomonas eugametos).